We begin with the raw amino-acid sequence, 495 residues long: Putative BTB/POZ domain-containing protein L98 (495 aa).

The BTB domain maps to 15–85; the sequence is SDLTIEFVDN…FYGIETTNDY (71 aa).

It belongs to the mimivirus BTB/WD family.

In Acanthamoeba polyphaga (Amoeba), this protein is Putative BTB/POZ domain-containing protein L98.